We begin with the raw amino-acid sequence, 123 residues long: Fluoride-specific ion channel FluC (123 aa).

The next 4 membrane-spanning stretches (helical) occupy residues 7–27, 39–59, 68–88, and 101–121; these read MAIA…SGLL, MVNS…FWGF, FFGT…YETF, and LNIL…FMLA. The Na(+) site is built by Gly75 and Ser78.

This sequence belongs to the fluoride channel Fluc/FEX (TC 1.A.43) family.

It localises to the cell membrane. It catalyses the reaction fluoride(in) = fluoride(out). Its activity is regulated as follows. Na(+) is not transported, but it plays an essential structural role and its presence is essential for fluoride channel function. In terms of biological role, fluoride-specific ion channel. Important for reducing fluoride concentration in the cell, thus reducing its toxicity. This chain is Fluoride-specific ion channel FluC, found in Thermococcus kodakarensis (strain ATCC BAA-918 / JCM 12380 / KOD1) (Pyrococcus kodakaraensis (strain KOD1)).